A 516-amino-acid chain; its full sequence is tRNA-2-methylthio-N(6)-dimethylallyladenosine synthase (516 aa).

Residues 17–133 (RSFEVRTFGC…LPSLLSRSEH (117 aa)) form the MTTase N-terminal domain. [4Fe-4S] cluster contacts are provided by Cys26, Cys62, Cys96, Cys170, Cys174, and Cys177. The 237-residue stretch at 156 to 392 (RESAYAGWVS…LALQERISTE (237 aa)) folds into the Radical SAM core domain. The 72-residue stretch at 395–466 (AKLIGTEVEL…PFFLIADSGV (72 aa)) folds into the TRAM domain. Disordered regions lie at residues 409–438 (SGGR…QGHV) and 492–516 (GLGL…GCGC). The segment covering 412–438 (RKNDKTQRMTGRSRDGRLVHFDPQGHV) has biased composition (basic and acidic residues).

The protein belongs to the methylthiotransferase family. MiaB subfamily. As to quaternary structure, monomer. [4Fe-4S] cluster serves as cofactor.

Its subcellular location is the cytoplasm. The enzyme catalyses N(6)-dimethylallyladenosine(37) in tRNA + (sulfur carrier)-SH + AH2 + 2 S-adenosyl-L-methionine = 2-methylsulfanyl-N(6)-dimethylallyladenosine(37) in tRNA + (sulfur carrier)-H + 5'-deoxyadenosine + L-methionine + A + S-adenosyl-L-homocysteine + 2 H(+). Functionally, catalyzes the methylthiolation of N6-(dimethylallyl)adenosine (i(6)A), leading to the formation of 2-methylthio-N6-(dimethylallyl)adenosine (ms(2)i(6)A) at position 37 in tRNAs that read codons beginning with uridine. The sequence is that of tRNA-2-methylthio-N(6)-dimethylallyladenosine synthase from Corynebacterium diphtheriae (strain ATCC 700971 / NCTC 13129 / Biotype gravis).